We begin with the raw amino-acid sequence, 164 residues long: ATP synthase subunit b (164 aa).

A helical transmembrane segment spans residues 4-24; the sequence is LGINPTLFIAQLINFLLLIFI.

This sequence belongs to the ATPase B chain family. In terms of assembly, F-type ATPases have 2 components, F(1) - the catalytic core - and F(0) - the membrane proton channel. F(1) has five subunits: alpha(3), beta(3), gamma(1), delta(1), epsilon(1). F(0) has four main subunits: a(1), b(2) and c(10-14). The alpha and beta chains form an alternating ring which encloses part of the gamma chain. F(1) is attached to F(0) by a central stalk formed by the gamma and epsilon chains, while a peripheral stalk is formed by the delta and b chains.

It is found in the cell membrane. F(1)F(0) ATP synthase produces ATP from ADP in the presence of a proton or sodium gradient. F-type ATPases consist of two structural domains, F(1) containing the extramembraneous catalytic core and F(0) containing the membrane proton channel, linked together by a central stalk and a peripheral stalk. During catalysis, ATP synthesis in the catalytic domain of F(1) is coupled via a rotary mechanism of the central stalk subunits to proton translocation. Its function is as follows. Component of the F(0) channel, it forms part of the peripheral stalk, linking F(1) to F(0). The sequence is that of ATP synthase subunit b from Chloroflexus aurantiacus (strain ATCC 29366 / DSM 635 / J-10-fl).